A 489-amino-acid chain; its full sequence is Rhamnulokinase (489 aa).

13-17 is an ATP binding site; the sequence is ASSGR. Cysteine 68 and cysteine 222 are joined by a disulfide. Residues glycine 83 and 236–238 each bind substrate; that span reads HDT. Residue aspartate 237 is the Proton acceptor of the active site. Position 259 (threonine 259) interacts with ATP. Asparagine 296 provides a ligand contact to substrate. Glutamine 304 is a binding site for ATP. The cysteines at positions 353 and 370 are disulfide-linked. Position 402 (glycine 402) interacts with ATP. A disulfide bridge connects residues cysteine 413 and cysteine 417.

Belongs to the rhamnulokinase family. Requires Mg(2+) as cofactor.

It catalyses the reaction L-rhamnulose + ATP = L-rhamnulose 1-phosphate + ADP + H(+). It functions in the pathway carbohydrate degradation; L-rhamnose degradation; glycerone phosphate from L-rhamnose: step 2/3. Functionally, involved in the catabolism of L-rhamnose (6-deoxy-L-mannose). Catalyzes the transfer of the gamma-phosphate group from ATP to the 1-hydroxyl group of L-rhamnulose to yield L-rhamnulose 1-phosphate. This is Rhamnulokinase from Salmonella typhimurium (strain LT2 / SGSC1412 / ATCC 700720).